A 121-amino-acid chain; its full sequence is Small ribosomal subunit protein uS13 (121 aa).

A disordered region spans residues 93 to 121 (KGLPLRGQKTKTNARTRKGPKKTIANKKK).

Belongs to the universal ribosomal protein uS13 family. As to quaternary structure, part of the 30S ribosomal subunit. Forms a loose heterodimer with protein S19. Forms two bridges to the 50S subunit in the 70S ribosome.

In terms of biological role, located at the top of the head of the 30S subunit, it contacts several helices of the 16S rRNA. In the 70S ribosome it contacts the 23S rRNA (bridge B1a) and protein L5 of the 50S subunit (bridge B1b), connecting the 2 subunits; these bridges are implicated in subunit movement. Contacts the tRNAs in the A and P-sites. The polypeptide is Small ribosomal subunit protein uS13 (Clostridium perfringens (strain ATCC 13124 / DSM 756 / JCM 1290 / NCIMB 6125 / NCTC 8237 / Type A)).